We begin with the raw amino-acid sequence, 300 residues long: Large ribosomal subunit protein uL18 (300 aa).

Residues 246-267 (NIRSDPKRDRKPKKDVSKEPKR) are compositionally biased toward basic and acidic residues. The segment at 246-276 (NIRSDPKRDRKPKKDVSKEPKRWNAKKLTNA) is disordered.

This sequence belongs to the universal ribosomal protein uL18 family. As to quaternary structure, component of the large ribosomal subunit (LSU).

It is found in the cytoplasm. The protein resides in the nucleus. Its function is as follows. Component of the ribosome, a large ribonucleoprotein complex responsible for the synthesis of proteins in the cell. The small ribosomal subunit (SSU) binds messenger RNAs (mRNAs) and translates the encoded message by selecting cognate aminoacyl-transfer RNA (tRNA) molecules. The large subunit (LSU) contains the ribosomal catalytic site termed the peptidyl transferase center (PTC), which catalyzes the formation of peptide bonds, thereby polymerizing the amino acids delivered by tRNAs into a polypeptide chain. The nascent polypeptides leave the ribosome through a tunnel in the LSU and interact with protein factors that function in enzymatic processing, targeting, and the membrane insertion of nascent chains at the exit of the ribosomal tunnel. The protein is Large ribosomal subunit protein uL18 (RpL5) of Toxoptera citricida (Brown citrus aphid).